The sequence spans 4367 residues: Dynein heavy chain, cytoplasmic (4367 aa).

Over residues Met-1–Ser-13 the composition is skewed to pro residues. The interval Met-1–Ala-20 is disordered. The segment at Met-1–Asn-1904 is stem. Coiled-coil stretches lie at residues Ala-676–Val-693, Ile-1176–Arg-1215, Leu-1327–Leu-1351, Tyr-1557–Val-1574, and Asn-1637–Val-1668. AAA stretches follow at residues Tyr-1905–Ser-2130, Glu-2202–Ala-2460, Glu-2566–Gly-2815, and Thr-2909–Ile-3179. Gly-1943–Thr-1950 serves as a coordination point for ATP. A coiled-coil region spans residues Ala-2195 to Ile-2218. ATP-binding positions include Gly-2240 to Ser-2247, Gly-2605 to Thr-2612, and Gly-2947 to Thr-2954. 3 coiled-coil regions span residues Gln-3193 to Ala-3296, Pro-3423 to Gln-3481, and Val-3778 to Ile-3809. The interval Gln-3193–Gln-3481 is stalk. AAA stretches follow at residues Leu-3565–Ala-3794 and Ala-4003–Thr-4215.

This sequence belongs to the dynein heavy chain family. In terms of assembly, consists of at least two heavy chains and a number of intermediate and light chains.

It localises to the cytoplasm. It is found in the cytoskeleton. In terms of biological role, cytoplasmic dynein acts as a motor for the intracellular retrograde motility of vesicles and organelles along microtubules. Dynein has ATPase activity; the force-producing power stroke is thought to occur on release of ADP. Required to maintain uniform nuclear distribution in hyphae. This is Dynein heavy chain, cytoplasmic (ro-1) from Neurospora crassa (strain ATCC 24698 / 74-OR23-1A / CBS 708.71 / DSM 1257 / FGSC 987).